The primary structure comprises 196 residues: MLFRYLVWLFRFIEVKNVASISLLVIGSIYLTTAISNNISTTISPTTSSNSLTTAISNNTSTTISPTTTSSNYLTSAISTNISDKEEDTPFSTDKTVFDGLSPITLYRAIRSTLNDTMTDILTRPYRPTTVIFHSDTPQPVKNATQGNIIKKTYRQVLTFFIQPNPLFPCFKNHEVFLNLANILNTILCIILIKNV.

2 consecutive repeat copies span residues 28-48 and 49-70. A 3; approximate repeat occupies 71 to 92; sequence SNYLTSAISTNISDKEEDTPFS.

Belongs to the asfivirus I196L family.

In African swine fever virus (isolate Warthog/Namibia/Wart80/1980) (ASFV), this protein is Late protein I196L.